Reading from the N-terminus, the 662-residue chain is tRNA 5-methylaminomethyl-2-thiouridine biosynthesis bifunctional protein MnmC (662 aa).

The interval 1–245 is tRNA (mnm(5)s(2)U34)-methyltransferase; it reads MKQNAIQPAN…KREMLTGEMA (245 aa). The interval 270–662 is FAD-dependent cmnm(5)s(2)U34 oxidoreductase; it reads IGGGIASALL…RKLLKGKAVK (393 aa).

The protein in the N-terminal section; belongs to the methyltransferase superfamily. tRNA (mnm(5)s(2)U34)-methyltransferase family. In the C-terminal section; belongs to the DAO family. It depends on FAD as a cofactor.

The protein resides in the cytoplasm. It catalyses the reaction 5-aminomethyl-2-thiouridine(34) in tRNA + S-adenosyl-L-methionine = 5-methylaminomethyl-2-thiouridine(34) in tRNA + S-adenosyl-L-homocysteine + H(+). Its function is as follows. Catalyzes the last two steps in the biosynthesis of 5-methylaminomethyl-2-thiouridine (mnm(5)s(2)U) at the wobble position (U34) in tRNA. Catalyzes the FAD-dependent demodification of cmnm(5)s(2)U34 to nm(5)s(2)U34, followed by the transfer of a methyl group from S-adenosyl-L-methionine to nm(5)s(2)U34, to form mnm(5)s(2)U34. This chain is tRNA 5-methylaminomethyl-2-thiouridine biosynthesis bifunctional protein MnmC, found in Klebsiella pneumoniae subsp. pneumoniae (strain ATCC 700721 / MGH 78578).